A 245-amino-acid chain; its full sequence is 1-(5-phosphoribosyl)-5-[(5-phosphoribosylamino)methylideneamino] imidazole-4-carboxamide isomerase (245 aa).

Residue Asp-8 is the Proton acceptor of the active site. The active-site Proton donor is Asp-129.

This sequence belongs to the HisA/HisF family.

The protein localises to the cytoplasm. The enzyme catalyses 1-(5-phospho-beta-D-ribosyl)-5-[(5-phospho-beta-D-ribosylamino)methylideneamino]imidazole-4-carboxamide = 5-[(5-phospho-1-deoxy-D-ribulos-1-ylimino)methylamino]-1-(5-phospho-beta-D-ribosyl)imidazole-4-carboxamide. It participates in amino-acid biosynthesis; L-histidine biosynthesis; L-histidine from 5-phospho-alpha-D-ribose 1-diphosphate: step 4/9. The chain is 1-(5-phosphoribosyl)-5-[(5-phosphoribosylamino)methylideneamino] imidazole-4-carboxamide isomerase from Rhodopseudomonas palustris (strain ATCC BAA-98 / CGA009).